The sequence spans 916 residues: Probable serine/threonine-protein kinase DDB_G0267514 (916 aa).

Disordered regions lie at residues 283–311, 461–518, and 550–646; these read SGGG…SGGS, NNNQ…SPLD, and FNNQ…EPPS. Low complexity-rich tracts occupy residues 461 to 493 and 550 to 622; these read NNNQ…QQQP and FNNQ…LINN. The span at 623–646 shows a compositional bias: polar residues; sequence HSPNQYNNQGNILKNSGSVVEPPS. A Protein kinase domain is found at 662–916; the sequence is LKISSKLGEG…EILNLLNEIP (255 aa). Residues 668-676 and Lys689 each bind ATP; that span reads LGEGTFGVV. Asp784 serves as the catalytic Proton acceptor.

This sequence belongs to the protein kinase superfamily. TKL Ser/Thr protein kinase family.

It catalyses the reaction L-seryl-[protein] + ATP = O-phospho-L-seryl-[protein] + ADP + H(+). The enzyme catalyses L-threonyl-[protein] + ATP = O-phospho-L-threonyl-[protein] + ADP + H(+). The polypeptide is Probable serine/threonine-protein kinase DDB_G0267514 (Dictyostelium discoideum (Social amoeba)).